The following is a 178-amino-acid chain: Caveolin-1 (178 aa).

The residue at position 2 (Ser2) is an N-acetylserine. Ser2 is modified (phosphoserine). A required for homooligomerization region spans residues 2 to 94 (SGGKYVDSEG…WKASFTTFTV (93 aa)). Residues 2-104 (SGGKYVDSEG…TKYWFYRLLS (103 aa)) lie on the Cytoplasmic side of the membrane. Lys5 carries the post-translational modification N6-acetyllysine; alternate. Lys5 is covalently cross-linked (Glycyl lysine isopeptide (Lys-Gly) (interchain with G-Cter in ubiquitin); alternate). Tyr6 carries the post-translational modification Phosphotyrosine. Phosphoserine is present on Ser9. Tyr14 carries the phosphotyrosine; by ABL1 modification. Tyr25 is subject to Phosphotyrosine. Glycyl lysine isopeptide (Lys-Gly) (interchain with G-Cter in ubiquitin) cross-links involve residues Lys26, Lys30, Lys39, Lys47, and Lys57. The interval 82–94 (DGIWKASFTTFTV) is interaction with CAVIN3. The helical intramembrane region spans 105–125 (AVFGIPMALIWGIYFAIVSFL). The Cytoplasmic segment spans residues 126 to 178 (HIWVVVPYIKSFLIEIQCISRVYSIYIHTFCDPLFEAFGKVFSNIRINTQKEI). Residues 131–142 (VPYIKSFLIEIQ) form an interacts with SPRY1, SPRY2, SPRY3 and SPRY4 region. S-palmitoyl cysteine attachment occurs at residues Cys143 and Cys156. The interacts with SPRY1, SPRY2, and SPRY4 stretch occupies residues 149–160 (SIYIHTFCDPLF). Residues 167-178 (FSNIRINTQKEI) are interacts with SPRY1, SPRY2, SPRY3 and SPRY4.

This sequence belongs to the caveolin family. Homooligomer. Interacts (via the N-terminus) with DPP4; the interaction is direct. Forms a stable heterooligomeric complex with CAV2 that targets to lipid rafts and drives caveolae formation. Interacts with PACSIN2; this interaction induces membrane tubulation. Interacts with BMX, BTK, CTNNB1, CDH1, GLIPR2, JUP, NOSTRIN, SNAP25 and STX1A. Interacts with SLC7A9. Interacts with TGFBR1. Interacts with CAVIN3 (via leucine-zipper domain) in a cholesterol-sensitive manner. Interacts with CAVIN1. Interacts with EHD2 in a cholesterol-dependent manner. Forms a ternary complex with UBXN6 and VCP; mediates CAV1 targeting to lysosomes for degradation. Interacts with ABCG1; this interaction regulates ABCG1-mediated cholesterol efflux. Interacts with NEU3; this interaction enhances NEU3 sialidase activity within caveola. Interacts (via C-terminus) with SPRY1, SPRY2 (via C-terminus), SPRY3, and SPRY4. Phosphorylated at Tyr-14 by ABL1 in response to oxidative stress. In terms of processing, ubiquitinated. Undergo monoubiquitination and multi- and/or polyubiquitination. Monoubiquitination of N-terminal lysines promotes integration in a ternary complex with UBXN6 and VCP which promotes oligomeric CAV1 targeting to lysosomes for degradation. Ubiquitinated by ZNRF1; leading to degradation and modulation of the TLR4-mediated immune response.

The protein localises to the golgi apparatus membrane. It localises to the cell membrane. It is found in the membrane. The protein resides in the caveola. Its subcellular location is the membrane raft. In terms of biological role, may act as a scaffolding protein within caveolar membranes. Forms a stable heterooligomeric complex with CAV2 that targets to lipid rafts and drives caveolae formation. Mediates the recruitment of CAVIN proteins (CAVIN1/2/3/4) to the caveolae. Interacts directly with G-protein alpha subunits and can functionally regulate their activity. Involved in the costimulatory signal essential for T-cell receptor (TCR)-mediated T-cell activation. Its binding to DPP4 induces T-cell proliferation and NF-kappa-B activation in a T-cell receptor/CD3-dependent manner. Recruits CTNNB1 to caveolar membranes and may regulate CTNNB1-mediated signaling through the Wnt pathway. Negatively regulates TGFB1-mediated activation of SMAD2/3 by mediating the internalization of TGFBR1 from membrane rafts leading to its subsequent degradation. Binds 20(S)-hydroxycholesterol (20(S)-OHC). The sequence is that of Caveolin-1 (CAV1) from Rhinolophus ferrumequinum (Greater horseshoe bat).